The sequence spans 402 residues: uncharacterized protein (402 aa).

This is an uncharacterized protein from Saccharomyces cerevisiae (strain ATCC 204508 / S288c) (Baker's yeast).